The following is a 417-amino-acid chain: Pelargonidin 3-O-(6-caffeoylglucoside) 5-O-(6-O-malonylglucoside) 4'''-malonyltransferase (417 aa).

Catalysis depends on proton acceptor residues H147 and D360.

Belongs to the plant acyltransferase family. As to quaternary structure, monomer. In terms of tissue distribution, expressed at higher level in recently opened, fully pigmented flowers.

The enzyme catalyses 4'''-demalonylsalvianin + malonyl-CoA = salvianin + CoA. It participates in pigment biosynthesis; anthocyanin biosynthesis. With respect to regulation, inhibited by the following metal ions: Cd(2+), Cu(2+), Fe(2+), Hg(2+) and Zn(2+). Activity is strongly inhibited by CoA-SH and partially inhibited by acetyl-CoA, caffeic acid and bisdemalonylsalvianin. Its function is as follows. Catalyzes the transfer of the malonyl group from malonyl-CoA to the 4'''-hydroxyl group of the 5-glucosyl moiety of anthocyanins. Anthocyanins are ubiquitous colored pigments that are responsible for petal color. The sequence is that of Pelargonidin 3-O-(6-caffeoylglucoside) 5-O-(6-O-malonylglucoside) 4'''-malonyltransferase from Salvia splendens (Scarlet sage).